The chain runs to 188 residues: GMP synthase [glutamine-hydrolyzing] subunit A (188 aa).

In terms of domain architecture, Glutamine amidotransferase type-1 spans 1–188 (MIIIMDNGGQ…RNFAKICGEL (188 aa)). The active-site Nucleophile is the C78. Residues H165 and E167 contribute to the active site.

In terms of assembly, heterodimer composed of a glutamine amidotransferase subunit (A) and a GMP-binding subunit (B).

It catalyses the reaction XMP + L-glutamine + ATP + H2O = GMP + L-glutamate + AMP + diphosphate + 2 H(+). Its pathway is purine metabolism; GMP biosynthesis; GMP from XMP (L-Gln route): step 1/1. In terms of biological role, catalyzes the synthesis of GMP from XMP. This Pyrococcus furiosus (strain ATCC 43587 / DSM 3638 / JCM 8422 / Vc1) protein is GMP synthase [glutamine-hydrolyzing] subunit A.